Here is a 493-residue protein sequence, read N- to C-terminus: Leucine-rich repeat-containing protein 14 (493 aa).

Residues 111-146 form an LRR 1; degenerate repeat; the sequence is KHALRVLDMTGLLDDGVEQDPGTMSMWDCTAAVART. The stretch at 194-218 is one LRR 2; degenerate repeat; that stretch reads RLCCRDLRAEDLPMRNTVALLQLLD. An LRR 3; degenerate repeat occupies 219-246; sequence AGCLRRVDLRFNNLGLRGLSVIIPHVAR. The stretch at 247–282 is one LRR 4; degenerate repeat; the sequence is FQHLASLRLHYVHGDSRQPSVDGEDNFRYFLAQMGR. LRR repeat units lie at residues 283-307, 308-339, 340-360, 364-391, and 392-416; these read FTCL…LSTL, QSPL…AHLK, KLDL…QGLL, AATL…ILTQ, and CASL…LLRD.

It belongs to the PRAME family. LRRC14 subfamily. Interacts with IKBKB; disrupts IKBKB-IKBKG interaction preventing I-kappa-B-kinase (IKK) core complex formation and leading to a decrease of IKBKB phosphorylation and NF-kappaB activation. Interacts with CHUK.

The protein resides in the cytoplasm. Negatively regulates Toll-like receptor-mediated NF-kappa-B signaling by disrupting IKK core complex formation through interaction with IKBKB. This is Leucine-rich repeat-containing protein 14 from Homo sapiens (Human).